The primary structure comprises 392 residues: Chorismate synthase (392 aa).

2 residues coordinate NADP(+): Arg-40 and Arg-46. FMN-binding positions include 129–131 (RSS), 257–258 (QA), Gly-302, 317–321 (KPIAT), and Arg-343.

It belongs to the chorismate synthase family. Homotetramer. FMNH2 serves as cofactor.

It carries out the reaction 5-O-(1-carboxyvinyl)-3-phosphoshikimate = chorismate + phosphate. Its pathway is metabolic intermediate biosynthesis; chorismate biosynthesis; chorismate from D-erythrose 4-phosphate and phosphoenolpyruvate: step 7/7. Catalyzes the anti-1,4-elimination of the C-3 phosphate and the C-6 proR hydrogen from 5-enolpyruvylshikimate-3-phosphate (EPSP) to yield chorismate, which is the branch point compound that serves as the starting substrate for the three terminal pathways of aromatic amino acid biosynthesis. This reaction introduces a second double bond into the aromatic ring system. This chain is Chorismate synthase, found in Chloroherpeton thalassium (strain ATCC 35110 / GB-78).